The following is a 339-amino-acid chain: Nucleoid-associated protein Asuc_0779 (339 aa).

This sequence belongs to the YejK family.

The protein resides in the cytoplasm. Its subcellular location is the nucleoid. The sequence is that of Nucleoid-associated protein Asuc_0779 from Actinobacillus succinogenes (strain ATCC 55618 / DSM 22257 / CCUG 43843 / 130Z).